The sequence spans 915 residues: Metabotropic glutamate receptor 7 (915 aa).

Residues 1 to 34 form the signal peptide; it reads MVQLGKLLRVLTLMKFPCCVLEVLLCVLAAAARG. Residues 35–590 are Extracellular-facing; sequence QEMYAPHSIR…IIKLEWHSPW (556 aa). A disulfide bridge connects residues cysteine 67 and cysteine 109. Asparagine 98 carries N-linked (GlcNAc...) asparagine glycosylation. Residues serine 159, 180 to 182, tyrosine 230, and aspartate 314 each bind L-glutamate; that span reads AST. Cystine bridges form between cysteine 249–cysteine 541, cysteine 374–cysteine 390, cysteine 430–cysteine 437, cysteine 523–cysteine 542, cysteine 527–cysteine 545, cysteine 548–cysteine 560, and cysteine 563–cysteine 576. Lysine 407 contacts L-glutamate. Residues asparagine 458 and asparagine 486 are each glycosylated (N-linked (GlcNAc...) asparagine). Asparagine 572 carries N-linked (GlcNAc...) asparagine glycosylation. The chain crosses the membrane as a helical span at residues 591 to 615; it reads AVIPVFLAMLGIIATIFVMATFIRY. At 616–627 the chain is on the cytoplasmic side; it reads NDTPIVRASGRE. A helical transmembrane segment spans residues 628–648; it reads LSYVLLTGIFLCYIITFLMIA. Residues 649-654 are Extracellular-facing; it reads KPDVAV. Residues 655-675 traverse the membrane as a helical segment; sequence CSFRRVFLGLGMCISYAALLT. The Cytoplasmic segment spans residues 676 to 702; sequence KTNRIYRIFEQGKKSVTAPRLISPTSQ. A helical membrane pass occupies residues 703–723; sequence LAITSSLISVQLLGVFIWFGV. At 724 to 753 the chain is on the extracellular side; sequence DPPNIIIDYDEHKTMNPEQARGVLKCDITD. The chain crosses the membrane as a helical span at residues 754–775; the sequence is LQIICSLGYSILLMVTCTVYAI. Residues 776-788 are Cytoplasmic-facing; that stretch reads KTRGVPENFNEAK. The helical transmembrane segment at 789 to 810 threads the bilayer; the sequence is PIGFTMYTTCIVWLAFIPIFFG. The Extracellular portion of the chain corresponds to 811-825; sequence TAQSAEKLYIQTTTL. Residues 826–850 form a helical membrane-spanning segment; it reads TISMNLSASVALGMLYMPKVYIIIF. The Cytoplasmic portion of the chain corresponds to 851 to 915; that stretch reads HPELNVQKRK…KYVSYNNLVI (65 aa). Residues 874-895 form a disordered region; that stretch reads SRLSHKPSDRPNGEAKTELCEN. Basic and acidic residues predominate over residues 879–892; the sequence is KPSDRPNGEAKTEL. The residue at position 900 (serine 900) is a Phosphoserine.

This sequence belongs to the G-protein coupled receptor 3 family. In terms of assembly, homodimer. Interacts with PICK1.

It localises to the cell membrane. Its function is as follows. G-protein coupled receptor activated by glutamate that regulates axon outgrowth through the MAPK-cAMP-PKA signaling pathway during neuronal development. Ligand binding causes a conformation change that triggers signaling via guanine nucleotide-binding proteins (G proteins) and modulates the activity of downstream effectors, such as adenylate cyclase that it inhibits. The polypeptide is Metabotropic glutamate receptor 7 (Grm7) (Mus musculus (Mouse)).